A 230-amino-acid chain; its full sequence is uncharacterized protein (230 aa).

This is an uncharacterized protein from Dictyostelium discoideum (Social amoeba).